We begin with the raw amino-acid sequence, 356 residues long: MKREILLERIDKLKQLMPWYVLEYYQSKLAVPYSFTTLYEYLKEYDRFFSWVLESGISNADKISDIPLSVLENMSKKDMESFILYLRERPLLNANTTKQGVSQTTINRTLSALSSLYKYLTEEVENDQGEPYFYRNVMKKVSTKKKKETLAARAENIKQKLFLGDETEGFLTYIDQEHPQQLSNRALSSFNKNKERDLAIIALLLASGVRLSEAVNLDLRDLNLKMMVIDVTRKGCKRDSVNVAAFAKPYLENYLAIRNQRYKTEKTDTALFLTLYRGVPNRIDASSVEKMVAKYSEDFKVRVTPHKLRHTLATRLYDATKSQVLVSHQLGHASTQVTDLYTHIVSDEQKNALDSL.

The 106-residue stretch at 16–121 (LMPWYVLEYY…ALSSLYKYLT (106 aa)) folds into the Core-binding (CB) domain. In terms of domain architecture, Tyr recombinase spans 169 to 354 (GFLTYIDQEH…VSDEQKNALD (186 aa)). Residues Arg-210, Lys-234, His-306, Arg-309, and His-332 contribute to the active site. Tyr-341 acts as the O-(3'-phospho-DNA)-tyrosine intermediate in catalysis.

Belongs to the 'phage' integrase family. XerS subfamily.

The protein localises to the cytoplasm. FtsK is required for recombination. Functionally, site-specific tyrosine recombinase, which acts by catalyzing the cutting and rejoining of the recombining DNA molecules. Essential to convert dimers of the bacterial chromosome into monomers to permit their segregation at cell division. In Streptococcus pneumoniae serotype 4 (strain ATCC BAA-334 / TIGR4), this protein is Tyrosine recombinase XerS.